The following is a 25-amino-acid chain: Cysteine protease inhibitor 2 (25 aa).

The protein belongs to the protease inhibitor I3 (leguminous Kunitz-type inhibitor) family. As to expression, cortex of tuber.

In terms of biological role, inhibitor of subtilisin. Inhibits moderately trypsin and chymotrypsin (serine proteases). May protect the plant by inhibiting proteases of invading organisms. The polypeptide is Cysteine protease inhibitor 2 (Solanum tuberosum (Potato)).